A 255-amino-acid polypeptide reads, in one-letter code: 5'-nucleotidase SurE (255 aa).

D8, D9, S40, and N93 together coordinate a divalent metal cation.

This sequence belongs to the SurE nucleotidase family. It depends on a divalent metal cation as a cofactor.

The protein localises to the cytoplasm. The enzyme catalyses a ribonucleoside 5'-phosphate + H2O = a ribonucleoside + phosphate. Its function is as follows. Nucleotidase that shows phosphatase activity on nucleoside 5'-monophosphates. This is 5'-nucleotidase SurE from Bradyrhizobium diazoefficiens (strain JCM 10833 / BCRC 13528 / IAM 13628 / NBRC 14792 / USDA 110).